We begin with the raw amino-acid sequence, 115 residues long: DNA-binding protein PH1060 (115 aa).

This sequence belongs to the PDCD5 family.

This Pyrococcus horikoshii (strain ATCC 700860 / DSM 12428 / JCM 9974 / NBRC 100139 / OT-3) protein is DNA-binding protein PH1060.